The chain runs to 83 residues: Putative potassium channel toxin Ts20 (83 aa).

An N-terminal signal peptide occupies residues 1–18; that stretch reads MKLDIVLIMFVTFSTTLA.

In terms of processing, contains 3 disulfide bonds. In terms of tissue distribution, expressed by the venom gland.

Its subcellular location is the secreted. Its function is as follows. Reversibly inhibits potassium channels. This chain is Putative potassium channel toxin Ts20, found in Tityus serrulatus (Brazilian scorpion).